The sequence spans 931 residues: Beta-mannosidase A (931 aa).

A signal peptide spans 1-21 (MRHSIGLAAALLAPTLPVALG). Residues Asn-40, Asn-79, Asn-247, Asn-282, and Asn-347 are each glycosylated (N-linked (GlcNAc...) asparagine). Glu-479 serves as the catalytic Proton donor. Asn-550, Asn-608, Asn-658, Asn-738, Asn-790, Asn-798, Asn-830, and Asn-918 each carry an N-linked (GlcNAc...) asparagine glycan.

The protein belongs to the glycosyl hydrolase 2 family. Beta-mannosidase A subfamily. Homodimer. N-glycosylated.

The protein resides in the secreted. It carries out the reaction Hydrolysis of terminal, non-reducing beta-D-mannose residues in beta-D-mannosides.. The protein operates within glycan metabolism; N-glycan degradation. Functionally, exoglycosidase that cleaves the single beta-linked mannose residue from the non-reducing end of beta-mannosidic oligosaccharides of various complexity and length. Involved in the degradation of polymeric mannan and galactomannan. Releases the terminal mannose residue from mannobiose and mannotriose, as well as from galactosyl-mannobiose (GM2), galactosyl-mannotriose (GM3) and di-galactosyl-mannopentaose (G2M5). This chain is Beta-mannosidase A (mndA), found in Aspergillus niger.